Consider the following 364-residue polypeptide: MNVLFAGGGTGGHLYPAVAMAVELLKLVPGASVSFAGTKNGIEASEIPRLGYRLHLLPVRGLKRGGSLRAILANVGILIDFAGALINAGGLIRRENPDVVVGTGGFVSAPVLLAAQMMGRRTLIQEQNAFPGVTTKLLSILASEIHLSFSEAQQYIRRNKGVFVSGNPARSFTLNSREKAQEHFGLQQQLPTLLVFGGSRGARSINSAVLKWIDAITERANLVWQTGALDYDRIRQQVKHSGRLWIGPYIEQMGDAYSASDLVMCRAGASSIAELTNTGKPSVLVPYPYATGDHQRYNAQALVGTGAAMLIDDSHLDAPEAQQIVLDLLHDPHRLSAMGASCGRLAHPDAALQLARRIIQLAKP.

UDP-N-acetyl-alpha-D-glucosamine-binding positions include 10-12 (TGG), asparagine 128, arginine 170, serine 199, isoleucine 250, and glutamine 295.

It belongs to the glycosyltransferase 28 family. MurG subfamily.

It localises to the cell inner membrane. It carries out the reaction di-trans,octa-cis-undecaprenyl diphospho-N-acetyl-alpha-D-muramoyl-L-alanyl-D-glutamyl-meso-2,6-diaminopimeloyl-D-alanyl-D-alanine + UDP-N-acetyl-alpha-D-glucosamine = di-trans,octa-cis-undecaprenyl diphospho-[N-acetyl-alpha-D-glucosaminyl-(1-&gt;4)]-N-acetyl-alpha-D-muramoyl-L-alanyl-D-glutamyl-meso-2,6-diaminopimeloyl-D-alanyl-D-alanine + UDP + H(+). It participates in cell wall biogenesis; peptidoglycan biosynthesis. Its function is as follows. Cell wall formation. Catalyzes the transfer of a GlcNAc subunit on undecaprenyl-pyrophosphoryl-MurNAc-pentapeptide (lipid intermediate I) to form undecaprenyl-pyrophosphoryl-MurNAc-(pentapeptide)GlcNAc (lipid intermediate II). This Chlorobium limicola (strain DSM 245 / NBRC 103803 / 6330) protein is UDP-N-acetylglucosamine--N-acetylmuramyl-(pentapeptide) pyrophosphoryl-undecaprenol N-acetylglucosamine transferase.